The primary structure comprises 456 residues: UDP-N-acetylmuramate--L-alanine ligase (456 aa).

Residue 117 to 123 participates in ATP binding; sequence GTHGKTT.

The protein belongs to the MurCDEF family.

It is found in the cytoplasm. The enzyme catalyses UDP-N-acetyl-alpha-D-muramate + L-alanine + ATP = UDP-N-acetyl-alpha-D-muramoyl-L-alanine + ADP + phosphate + H(+). Its pathway is cell wall biogenesis; peptidoglycan biosynthesis. Its function is as follows. Cell wall formation. The chain is UDP-N-acetylmuramate--L-alanine ligase from Clostridium tetani (strain Massachusetts / E88).